The chain runs to 122 residues: Large ribosomal subunit protein uL18 (122 aa).

Belongs to the universal ribosomal protein uL18 family. As to quaternary structure, part of the 50S ribosomal subunit; part of the 5S rRNA/L5/L18/L25 subcomplex. Contacts the 5S and 23S rRNAs.

Its function is as follows. This is one of the proteins that bind and probably mediate the attachment of the 5S RNA into the large ribosomal subunit, where it forms part of the central protuberance. The protein is Large ribosomal subunit protein uL18 of Geotalea uraniireducens (strain Rf4) (Geobacter uraniireducens).